Here is a 134-residue protein sequence, read N- to C-terminus: Replication enhancer protein (134 aa).

It belongs to the geminiviridae replication enhancer protein family. As to quaternary structure, homooligomer. Interacts with the replication-associated protein (REP). Interacts with host proliferating cell nuclear antigen (PCNA). Interacts with host retinoblastoma-related protein 1 (RBR1), and may thereby deregulate the host cell cycle. Oligomerization and interaction with PCNA are necessary for optimal replication enhancement.

Functionally, increases viral DNA accumulation. Enhances infectivity and symptom expression. This chain is Replication enhancer protein, found in Tomato yellow leaf curl Sardinia virus (TYLCSV).